A 301-amino-acid polypeptide reads, in one-letter code: GTPase Era (301 aa).

One can recognise an Era-type G domain in the interval 7-175; the sequence is YCGFIAIVGR…AGIVRKHLPE (169 aa). The segment at 15–22 is G1; the sequence is GRPNVGKS. GTP is bound at residue 15 to 22; it reads GRPNVGKS. A G2 region spans residues 41-45; it reads QTTRH. The tract at residues 62–65 is G3; the sequence is DTPG. Residues 62–66 and 124–127 each bind GTP; these read DTPGL and NKVD. The interval 124–127 is G4; the sequence is NKVD. Residues 154-156 are G5; sequence ISA. The KH type-2 domain maps to 206 to 283; sequence LGAELPYSVT…HLELWVKVKS (78 aa).

This sequence belongs to the TRAFAC class TrmE-Era-EngA-EngB-Septin-like GTPase superfamily. Era GTPase family. As to quaternary structure, monomer.

It localises to the cytoplasm. The protein localises to the cell inner membrane. In terms of biological role, an essential GTPase that binds both GDP and GTP, with rapid nucleotide exchange. Plays a role in 16S rRNA processing and 30S ribosomal subunit biogenesis and possibly also in cell cycle regulation and energy metabolism. The protein is GTPase Era of Salmonella heidelberg (strain SL476).